Reading from the N-terminus, the 251-residue chain is Imidazole glycerol phosphate synthase subunit HisF (251 aa).

Active-site residues include D11 and D130.

It belongs to the HisA/HisF family. As to quaternary structure, heterodimer of HisH and HisF.

The protein localises to the cytoplasm. It carries out the reaction 5-[(5-phospho-1-deoxy-D-ribulos-1-ylimino)methylamino]-1-(5-phospho-beta-D-ribosyl)imidazole-4-carboxamide + L-glutamine = D-erythro-1-(imidazol-4-yl)glycerol 3-phosphate + 5-amino-1-(5-phospho-beta-D-ribosyl)imidazole-4-carboxamide + L-glutamate + H(+). Its pathway is amino-acid biosynthesis; L-histidine biosynthesis; L-histidine from 5-phospho-alpha-D-ribose 1-diphosphate: step 5/9. Its function is as follows. IGPS catalyzes the conversion of PRFAR and glutamine to IGP, AICAR and glutamate. The HisF subunit catalyzes the cyclization activity that produces IGP and AICAR from PRFAR using the ammonia provided by the HisH subunit. This Pelodictyon phaeoclathratiforme (strain DSM 5477 / BU-1) protein is Imidazole glycerol phosphate synthase subunit HisF.